The sequence spans 443 residues: Minovincinine 19-hydroxy-O-acetyltransferase (443 aa).

Histidine 157 (proton acceptor) is an active-site residue. Positions 215–222 (RKRFLFSP) match the Nuclear localization signal motif. A coiled-coil region spans residues 316-343 (TKLVIGELRKAKDKLKNLSQEKLNYVAR). The active-site Proton acceptor is the aspartate 384.

This sequence belongs to the plant acyltransferase family. In terms of assembly, monomer. Expressed in cortical cells of the root tip, especially in hairy roots, as well as in etiolated seedlings. Mostly expressed in roots, and, at lower levels, in leaves.

Its subcellular location is the cytoplasm. The protein resides in the nucleus. It catalyses the reaction (+)-minovincinine + acetyl-CoA = (+)-echitovenine + CoA. The protein operates within alkaloid biosynthesis. Its function is as follows. Component of the monoterpenoid indole alkaloids (MIAs, e.g. echitovenine, tabersonine, lochnericine, 19-hydroxytabersonine and horhammericine) biosynthetic pathway; MIAs are used in cancer treatment and other medical applications. Acyltransferase catalyzing the conversion of (+)-minovincinine to (+)-echitovenine. The sequence is that of Minovincinine 19-hydroxy-O-acetyltransferase from Catharanthus roseus (Madagascar periwinkle).